A 282-amino-acid chain; its full sequence is Tyrosine recombinase XerA (282 aa).

The Core-binding (CB) domain maps to 2–79 (EAINEVIEEY…ALRSYFRFEG (78 aa)). Residues 95 to 271 (SLPKSLTREE…TVEHLRKAQE (177 aa)) form the Tyr recombinase domain. Active-site residues include Arg-132, Lys-157, His-223, Arg-226, and His-249. Residue Tyr-258 is the O-(3'-phospho-DNA)-tyrosine intermediate of the active site.

The protein belongs to the 'phage' integrase family. XerA subfamily.

The protein resides in the cytoplasm. In terms of biological role, site-specific tyrosine recombinase, which acts by catalyzing the cutting and rejoining of the recombining DNA molecules. In Thermococcus onnurineus (strain NA1), this protein is Tyrosine recombinase XerA.